A 510-amino-acid chain; its full sequence is Light-independent protochlorophyllide reductase subunit B (510 aa).

Asp36 contributes to the [4Fe-4S] cluster binding site. Catalysis depends on Asp296, which acts as the Proton donor. 431–432 (GM) contacts substrate.

This sequence belongs to the ChlB/BchB/BchZ family. As to quaternary structure, protochlorophyllide reductase is composed of three subunits; ChlL, ChlN and ChlB. Forms a heterotetramer of two ChlB and two ChlN subunits. [4Fe-4S] cluster is required as a cofactor.

It is found in the plastid. It localises to the chloroplast. It catalyses the reaction chlorophyllide a + oxidized 2[4Fe-4S]-[ferredoxin] + 2 ADP + 2 phosphate = protochlorophyllide a + reduced 2[4Fe-4S]-[ferredoxin] + 2 ATP + 2 H2O. It functions in the pathway porphyrin-containing compound metabolism; chlorophyll biosynthesis (light-independent). Functionally, component of the dark-operative protochlorophyllide reductase (DPOR) that uses Mg-ATP and reduced ferredoxin to reduce ring D of protochlorophyllide (Pchlide) to form chlorophyllide a (Chlide). This reaction is light-independent. The NB-protein (ChlN-ChlB) is the catalytic component of the complex. In Stigeoclonium helveticum (Green alga), this protein is Light-independent protochlorophyllide reductase subunit B.